The chain runs to 225 residues: Plasma membrane-associated cation-binding protein 1 (225 aa).

A lipid anchor (N-myristoyl glycine) is attached at glycine 2. Threonine 32 is subject to Phosphothreonine. At serine 107 the chain carries Phosphoserine. Over residues 140–197 (PVEEVKAEEPAKTEEPAKTEGTSGEKEEIVEETKKGETPETAVVEEKKPEVEEKKEEA) the composition is skewed to basic and acidic residues. The tract at residues 140–225 (PVEEVKAEEP…TAPVAEPPKP (86 aa)) is disordered. Residues threonine 152 and threonine 177 each carry the phosphothreonine modification.

The protein belongs to the DREPP family. In terms of assembly, interacts with Turnip mosaic virus (TuMV) P3N-PIPO. It depends on Cu(2+) as a cofactor. In terms of tissue distribution, mostly expressed in the basal region of hypocotyls. Expressed in seedlings, roots, shoots, stems, leaves (e.g. in epidermis and vascular tissues), flowers (e.g. in pistils and anthers) and siliques (at protein level).

It is found in the cell membrane. The protein resides in the cytoplasm. Its subcellular location is the cytoskeleton. It localises to the cell junction. The protein localises to the plasmodesma. Functionally, may be involved in intracellular signaling through interaction with PtdInsPs and calmodulin (CaM); may keep PtdInsPs attached to the plasma membrane until Ca(2+)-CaM reaches a competitive concentration subsequent to an increase triggered by a stimulus, thus leading to PtdInsPs release and subsequent activation of InsPs-dependent signaling cascade. Interacts competitively at the N-terminus with calcium ions and CaM (in a calcium-dependent manner), and with the phosphatidylinositol phosphates PtdIns(3,4,5)P(3), PtdIns(3,4)P(2), PtdIns(4,5)P(2) and PtdIns(3,5)P(2). Also binds weakly to PtdIns(3)P, PtdIns(4)P and PtdIns(5)P. Negative regulator of hypocotyl cell elongation by destabilizing cortical microtubules in a calcium-dependent manner. Binds directly to and destabilized microtubules to enhance microtubule depolymerization when cytoplasmic calcium increases. In case of Turnip mosaic virus (TuMV) infection, confers sensitivity by promoting viral cell-to-cell movement through interaction with viral P3N-PIPO. The chain is Plasma membrane-associated cation-binding protein 1 (PCAP1) from Arabidopsis thaliana (Mouse-ear cress).